Reading from the N-terminus, the 374-residue chain is Methionine import ATP-binding protein MetN 2 (374 aa).

Residues 1 to 22 form a disordered region; sequence MSVATLQRKLPEAAPRRAGQTE. The ABC transporter domain occupies 32-271; that stretch reads VRFIGLGKTY…PQHEVSKTLL (240 aa). 68-75 is a binding site for ATP; that stretch reads GRSGAGKS.

The protein belongs to the ABC transporter superfamily. Methionine importer (TC 3.A.1.24) family. The complex is composed of two ATP-binding proteins (MetN), two transmembrane proteins (MetI) and a solute-binding protein (MetQ).

The protein resides in the cell inner membrane. It catalyses the reaction L-methionine(out) + ATP + H2O = L-methionine(in) + ADP + phosphate + H(+). The catalysed reaction is D-methionine(out) + ATP + H2O = D-methionine(in) + ADP + phosphate + H(+). Its function is as follows. Part of the ABC transporter complex MetNIQ involved in methionine import. Responsible for energy coupling to the transport system. This chain is Methionine import ATP-binding protein MetN 2, found in Pseudomonas fluorescens (strain ATCC BAA-477 / NRRL B-23932 / Pf-5).